We begin with the raw amino-acid sequence, 216 residues long: UPF0502 protein PFL_4004 (216 aa).

This sequence belongs to the UPF0502 family.

This is UPF0502 protein PFL_4004 from Pseudomonas fluorescens (strain ATCC BAA-477 / NRRL B-23932 / Pf-5).